The sequence spans 364 residues: FMNH(2)-dependent dimethylsulfone monooxygenase (364 aa).

Belongs to the SsuD family.

The enzyme catalyses dimethyl sulfone + FMNH2 + O2 = methanesulfinate + FMN + formaldehyde + H2O + 2 H(+). Functionally, involved in the dimethyl sulfide degradation pathway. Catalyzes the oxidation of dimethylsulfone (DMSO2) to yield methanesulfinate, which is oxidized spontaneously to methanesulfonate in the presence of dioxygen and FMNH(2). In Pseudomonas fluorescens (strain Pf0-1), this protein is FMNH(2)-dependent dimethylsulfone monooxygenase.